The chain runs to 280 residues: Acetyl-coenzyme A carboxylase carboxyl transferase subunit beta (280 aa).

Residues 28 to 280 (IMTKCPSCRT…TLTKLLAMHQ (253 aa)) enclose the CoA carboxyltransferase N-terminal domain. Zn(2+) is bound by residues Cys32, Cys35, Cys51, and Cys54. The C4-type zinc finger occupies 32 to 54 (CPSCRTIMYTKDLKKNLSVCRTC).

Belongs to the AccD/PCCB family. As to quaternary structure, acetyl-CoA carboxylase is a heterohexamer composed of biotin carboxyl carrier protein (AccB), biotin carboxylase (AccC) and two subunits each of ACCase subunit alpha (AccA) and ACCase subunit beta (AccD). Zn(2+) is required as a cofactor.

Its subcellular location is the cytoplasm. The catalysed reaction is N(6)-carboxybiotinyl-L-lysyl-[protein] + acetyl-CoA = N(6)-biotinyl-L-lysyl-[protein] + malonyl-CoA. It participates in lipid metabolism; malonyl-CoA biosynthesis; malonyl-CoA from acetyl-CoA: step 1/1. Functionally, component of the acetyl coenzyme A carboxylase (ACC) complex. Biotin carboxylase (BC) catalyzes the carboxylation of biotin on its carrier protein (BCCP) and then the CO(2) group is transferred by the transcarboxylase to acetyl-CoA to form malonyl-CoA. In Shouchella clausii (strain KSM-K16) (Alkalihalobacillus clausii), this protein is Acetyl-coenzyme A carboxylase carboxyl transferase subunit beta.